We begin with the raw amino-acid sequence, 228 residues long: UPF0173 metal-dependent hydrolase Tpen_1493 (228 aa).

This sequence belongs to the UPF0173 family.

This chain is UPF0173 metal-dependent hydrolase Tpen_1493, found in Thermofilum pendens (strain DSM 2475 / Hrk 5).